The following is a 509-amino-acid chain: Maturase K (509 aa).

Belongs to the intron maturase 2 family. MatK subfamily.

It localises to the plastid. Its subcellular location is the chloroplast. Usually encoded in the trnK tRNA gene intron. Probably assists in splicing its own and other chloroplast group II introns. The chain is Maturase K from Nicotiana bigelovii (Bigelov's tobacco).